We begin with the raw amino-acid sequence, 304 residues long: Phosphoribosylaminoimidazole-succinocarboxamide synthase (304 aa).

It belongs to the SAICAR synthetase family.

It catalyses the reaction 5-amino-1-(5-phospho-D-ribosyl)imidazole-4-carboxylate + L-aspartate + ATP = (2S)-2-[5-amino-1-(5-phospho-beta-D-ribosyl)imidazole-4-carboxamido]succinate + ADP + phosphate + 2 H(+). Its pathway is purine metabolism; IMP biosynthesis via de novo pathway; 5-amino-1-(5-phospho-D-ribosyl)imidazole-4-carboxamide from 5-amino-1-(5-phospho-D-ribosyl)imidazole-4-carboxylate: step 1/2. This Komagataella pastoris (Yeast) protein is Phosphoribosylaminoimidazole-succinocarboxamide synthase (ADE1).